Reading from the N-terminus, the 648-residue chain is MASGSNVEEYELDVEALVVILRDRNIPRNPLHGEVIGLRLTEGWWGQIERFQMVRLILQDDDNEPLQRPRYEVIQRAVNPHTMFMISGPLAELQLAFQDLDLPEGPLRFGPLANGHYVQGDPYSSSYRPVTMAETAQMTRDELEDVLNTQSEIEIQMINLLELYEVETRALRRQLAERSSTGQGGISPGAPRSRPPVSSFSGLPSLPSIPGIHPRAPSPPRATSTPGNIPWSLGDDSPPSSSFPGPSQPRVSFHPGNPFVEEEGHRPRSQSRERRREILPAPVPSAPPMIQYIPVPPPPPIGTVIPIQHIRSVTGEPPRNPREIPIWLGRNAPAIDGVFPVTTPDLRCRIINAILGGNIGLSLTPGDCLTWDSAVATLFIRTHGTFPMHQLGNVIKGIVDQEGVATAYTLGMMLSGQNYQLVSGIIRGYLPGQAVVTALQQRLDQEIDNQTRAETFIQHLNAVYEILGLNARGQSIRASVTPQPRPSRGRGRGQNTSRPSQGPANSGRGRQRPASGQSNRGSSTQNQNQDNLNQGGYNLRPRTYQPQRYGGGRGRRWNDNTNNQESRPSDQGSQTPRPNQAGSGVRGNQSQTPRPAAGRGGRGNHNRNQRSSGAGDSRAVNTVTQSATSSTDESSSAVTAASGGDQRD.

Residues 37 to 60 (GLRLTEGWWGQIERFQMVRLILQD) are involved in viral assembly and export. The tract at residues 175–275 (LAERSSTGQG…RPRSQSRERR (101 aa)) is disordered. A compositionally biased stretch (low complexity) spans 230–249 (PWSLGDDSPPSSSFPGPSQP). The segment covering 262–275 (EEGHRPRSQSRERR) has biased composition (basic and acidic residues). Residues 284–287 (PSAP) carry the PTAP/PSAP motif motif. Residues 476–648 (IRASVTPQPR…TAASGGDQRD (173 aa)) form a disordered region. The segment at 485–510 (RPSRGRGRGQNTSRPSQGPANSGRGR) is nucleic acid-binding; GR-box 1. 2 stretches are compositionally biased toward polar residues: residues 495-504 (NTSRPSQGPA) and 514-524 (ASGQSNRGSST). A compositionally biased stretch (low complexity) spans 525 to 534 (QNQNQDNLNQ). 2 GR-box regions span residues 535–556 (GGYN…RGRR) and 586–618 (RGNQ…GDSR). The Nuclear localization signal motif lies at 535–556 (GGYNLRPRTYQPQRYGGGRGRR). Positions 559-592 (DNTNNQESRPSDQGSQTPRPNQAGSGVRGNQSQT) are enriched in polar residues. A compositionally biased stretch (low complexity) spans 624-642 (TQSATSSTDESSSAVTAAS).

Specifically interacts with the N-terminus of leader peptide. This specific interaction between Gag protein and Env glycoprotein may compensate for the lack of a Gag membrane targeting signal, and allow particle egress. The capsid is composed of multimeric Gag protein. Interacts with human TSG101. Interacts with host light chain cytoplasmic dynein DYNLL1; this interaction is critical for intracellular microtubule-dependent viral genome transport toward the centrosome. Post-translationally, specific enzymatic cleavages in vivo by viral protease yield mature proteins. The protease is not cleaved off from Pol. Since cleavage efficiency is not optimal for all sites, intermediary molecules are expressed.

Its subcellular location is the virion. It is found in the host nucleus. The protein resides in the host cytoplasm. Its function is as follows. Involved in capsid formation and genome binding. Shortly after infection, interaction between incoming particle-associated Gag proteins and host dynein allows centrosomal targeting of the viral genome (associated to Gag), prior to nucleus translocation and integration into host genome. The sequence is that of Gag polyprotein (gag) from Human spumaretrovirus (SFVcpz(hu)).